A 198-amino-acid polypeptide reads, in one-letter code: Protein GrpE (198 aa).

A disordered region spans residues 1–56; the sequence is MVEKKKSQAEKNNQSATEEEIEKAVKGSKRDSNAADEKNSASAAASSSAVSDAEPA. The segment covering 22–39 has biased composition (basic and acidic residues); it reads EKAVKGSKRDSNAADEKN. Over residues 40-56 the composition is skewed to low complexity; sequence SASAAASSSAVSDAEPA.

The protein belongs to the GrpE family. As to quaternary structure, homodimer.

It localises to the cytoplasm. Its function is as follows. Participates actively in the response to hyperosmotic and heat shock by preventing the aggregation of stress-denatured proteins, in association with DnaK and GrpE. It is the nucleotide exchange factor for DnaK and may function as a thermosensor. Unfolded proteins bind initially to DnaJ; upon interaction with the DnaJ-bound protein, DnaK hydrolyzes its bound ATP, resulting in the formation of a stable complex. GrpE releases ADP from DnaK; ATP binding to DnaK triggers the release of the substrate protein, thus completing the reaction cycle. Several rounds of ATP-dependent interactions between DnaJ, DnaK and GrpE are required for fully efficient folding. This chain is Protein GrpE, found in Oenococcus oeni (strain ATCC BAA-331 / PSU-1).